We begin with the raw amino-acid sequence, 351 residues long: 5-deoxyribose 1-phosphate isomerase (351 aa).

Residues 48 to 50 (RGA), arginine 91, and glutamine 198 contribute to the substrate site. Catalysis depends on aspartate 239, which acts as the Proton donor. Residue 249–250 (NK) coordinates substrate.

The protein belongs to the EIF-2B alpha/beta/delta subunits family. DrdI subfamily.

The enzyme catalyses 5-deoxy-alpha-D-ribose 1-phosphate = 5-deoxy-D-ribulose 1-phosphate. It functions in the pathway carbohydrate degradation. Catalyzes the isomerization of 5-deoxy-alpha-D-ribose 1-phosphate to 5-deoxy-D-ribulose 1-phosphate, as part of a 5-deoxyribose salvage pathway that recycles this toxic radical SAM enzyme by-product to mainstream metabolites. The sequence is that of 5-deoxyribose 1-phosphate isomerase from Moorella thermoacetica (strain ATCC 39073 / JCM 9320).